The following is a 289-amino-acid chain: Proteasome subunit beta (289 aa).

The propeptide at 1–55 (MTWPLPDRLSINSAISGSAVDLSSFAEFLRRQAPELLPASIKHGGGAVGDQLPHA) is removed in mature form; by autocatalysis. Catalysis depends on Thr56, which acts as the Nucleophile.

It belongs to the peptidase T1B family. As to quaternary structure, the 20S proteasome core is composed of 14 alpha and 14 beta subunits that assemble into four stacked heptameric rings, resulting in a barrel-shaped structure. The two inner rings, each composed of seven catalytic beta subunits, are sandwiched by two outer rings, each composed of seven alpha subunits. The catalytic chamber with the active sites is on the inside of the barrel. Has a gated structure, the ends of the cylinder being occluded by the N-termini of the alpha-subunits. Is capped by the proteasome-associated ATPase, ARC.

The protein resides in the cytoplasm. The catalysed reaction is Cleavage of peptide bonds with very broad specificity.. Its pathway is protein degradation; proteasomal Pup-dependent pathway. Its activity is regulated as follows. The formation of the proteasomal ATPase ARC-20S proteasome complex, likely via the docking of the C-termini of ARC into the intersubunit pockets in the alpha-rings, may trigger opening of the gate for substrate entry. Interconversion between the open-gate and close-gate conformations leads to a dynamic regulation of the 20S proteasome proteolysis activity. Functionally, component of the proteasome core, a large protease complex with broad specificity involved in protein degradation. This Mycobacterium marinum (strain ATCC BAA-535 / M) protein is Proteasome subunit beta.